The primary structure comprises 327 residues: tRNA uridine(34) hydroxylase (327 aa).

The region spanning 123–217 (SDPEVLLVDT…YLEEVKLEES (95 aa)) is the Rhodanese domain. The active-site Cysteine persulfide intermediate is the C177.

This sequence belongs to the TrhO family.

It carries out the reaction uridine(34) in tRNA + AH2 + O2 = 5-hydroxyuridine(34) in tRNA + A + H2O. Functionally, catalyzes oxygen-dependent 5-hydroxyuridine (ho5U) modification at position 34 in tRNAs. The polypeptide is tRNA uridine(34) hydroxylase (Shewanella pealeana (strain ATCC 700345 / ANG-SQ1)).